Reading from the N-terminus, the 342-residue chain is 4-hydroxy-3-methylbut-2-enyl diphosphate reductase (342 aa).

Cys47 contacts [4Fe-4S] cluster. (2E)-4-hydroxy-3-methylbut-2-enyl diphosphate contacts are provided by His78 and His111. Residues His78 and His111 each coordinate dimethylallyl diphosphate. Isopentenyl diphosphate contacts are provided by His78 and His111. Cys133 serves as a coordination point for [4Fe-4S] cluster. His161 is a binding site for (2E)-4-hydroxy-3-methylbut-2-enyl diphosphate. His161 lines the dimethylallyl diphosphate pocket. Position 161 (His161) interacts with isopentenyl diphosphate. Glu163 acts as the Proton donor in catalysis. Thr201 is a (2E)-4-hydroxy-3-methylbut-2-enyl diphosphate binding site. Cys231 is a binding site for [4Fe-4S] cluster. (2E)-4-hydroxy-3-methylbut-2-enyl diphosphate contacts are provided by Ser259, Ser260, Asn261, and Ser303. Dimethylallyl diphosphate-binding residues include Ser259, Ser260, Asn261, and Ser303. Isopentenyl diphosphate is bound by residues Ser259, Ser260, Asn261, and Ser303.

The protein belongs to the IspH family. It depends on [4Fe-4S] cluster as a cofactor.

It catalyses the reaction isopentenyl diphosphate + 2 oxidized [2Fe-2S]-[ferredoxin] + H2O = (2E)-4-hydroxy-3-methylbut-2-enyl diphosphate + 2 reduced [2Fe-2S]-[ferredoxin] + 2 H(+). The enzyme catalyses dimethylallyl diphosphate + 2 oxidized [2Fe-2S]-[ferredoxin] + H2O = (2E)-4-hydroxy-3-methylbut-2-enyl diphosphate + 2 reduced [2Fe-2S]-[ferredoxin] + 2 H(+). It functions in the pathway isoprenoid biosynthesis; dimethylallyl diphosphate biosynthesis; dimethylallyl diphosphate from (2E)-4-hydroxy-3-methylbutenyl diphosphate: step 1/1. Its pathway is isoprenoid biosynthesis; isopentenyl diphosphate biosynthesis via DXP pathway; isopentenyl diphosphate from 1-deoxy-D-xylulose 5-phosphate: step 6/6. Its function is as follows. Catalyzes the conversion of 1-hydroxy-2-methyl-2-(E)-butenyl 4-diphosphate (HMBPP) into a mixture of isopentenyl diphosphate (IPP) and dimethylallyl diphosphate (DMAPP). Acts in the terminal step of the DOXP/MEP pathway for isoprenoid precursor biosynthesis. In Anaplasma marginale (strain St. Maries), this protein is 4-hydroxy-3-methylbut-2-enyl diphosphate reductase.